The chain runs to 406 residues: Exo-alpha-sialidase (406 aa).

Positions 1–20 (MQSMRFMILALLVQFLPAWA) are cleaved as a signal peptide. The substrate site is built by arginine 59, arginine 78, aspartate 84, and glutamine 148. An N-linked (GlcNAc...) asparagine glycan is attached at asparagine 235. Residues arginine 265, arginine 322, 322–323 (RR), 331–332 (YD), lysine 337, tyrosine 358, aspartate 376, and 376–378 (DFF) each bind substrate. Asparagine 396 carries N-linked (GlcNAc...) asparagine glycosylation.

Belongs to the glycosyl hydrolase 33 family.

The catalysed reaction is Hydrolysis of alpha-(2-&gt;3)-, alpha-(2-&gt;6)-, alpha-(2-&gt;8)- glycosidic linkages of terminal sialic acid residues in oligosaccharides, glycoproteins, glycolipids, colominic acid and synthetic substrates.. In terms of biological role, sialidase is able to release sialic acid from a wide variety of natural substrates including bovine salivary mucin, colominic acid, bovine fetuin, a serum glycoprotein containing both alpha-2-6 and alpha-2-3-linkages in a ratio of about 3:2, and glycoproteins and glycolipids from thermally denatured human lung epithelial cells. Does not show any trans-sialidase activity since it is able to remove terminal sialic acid residues but is unable to catalyze their transfer to the acceptor substrate. 2-keto-3-deoxynononic acid (KDN) is the preferred substrate and A.fumigatus can utilize KDN as a sole carbon source. This chain is Exo-alpha-sialidase, found in Aspergillus fumigatus (strain ATCC MYA-4609 / CBS 101355 / FGSC A1100 / Af293) (Neosartorya fumigata).